The following is a 546-amino-acid chain: Chaperonin GroEL (546 aa).

ATP is bound by residues 30-33, 87-91, Gly-414, 477-479, and Asp-493; these read TLGP, DGTTT, and NAL.

This sequence belongs to the chaperonin (HSP60) family. Forms a cylinder of 14 subunits composed of two heptameric rings stacked back-to-back. Interacts with the co-chaperonin GroES.

The protein localises to the cytoplasm. The catalysed reaction is ATP + H2O + a folded polypeptide = ADP + phosphate + an unfolded polypeptide.. Together with its co-chaperonin GroES, plays an essential role in assisting protein folding. The GroEL-GroES system forms a nano-cage that allows encapsulation of the non-native substrate proteins and provides a physical environment optimized to promote and accelerate protein folding. This chain is Chaperonin GroEL, found in Syntrophomonas wolfei subsp. wolfei (strain DSM 2245B / Goettingen).